A 408-amino-acid polypeptide reads, in one-letter code: Probable E3 ubiquitin-protein ligase makorin-1 (408 aa).

C3H1-type zinc fingers lie at residues 34–61 (WTRHVTCRYFIHGVCKEGINCRYSHDLA) and 63–90 (SRSAMICRYFQRGCCAYGDRCRYEHNKP). 2 disordered regions span residues 90 to 114 (PLQEDPTGDTCTAPSESLPEPSGNI) and 154 to 173 (EAYTQGTVKPDEGREEPADP). A compositionally biased stretch (basic and acidic residues) spans 162-173 (KPDEGREEPADP). Residues 174 to 201 (ELKKQLCPYAAMGECRYGENCVYLHGDP) form a C3H1-type 3 zinc finger. Positions 202 to 229 (CDMCGLQVLHPVDTCQRSQHIKSCIEAH) are makorin-type Cys-His. An RING-type zinc finger spans residues 247-301 (CGICMEVVYEKTNPSERRFGILSNCSHSYCLKCIRKWRSAKQFESKIIKSCPECR). Residues 330-359 (AMSSKSCRYFDEGRGTCPFGGNCFYRHAYP) form a C3H1-type 4 zinc finger. The tract at residues 363–408 (IEEPQPRQKSGMSSRYRIPSPSAGIDFGSLTSERAETRLRTRKTKL) is disordered.

The catalysed reaction is S-ubiquitinyl-[E2 ubiquitin-conjugating enzyme]-L-cysteine + [acceptor protein]-L-lysine = [E2 ubiquitin-conjugating enzyme]-L-cysteine + N(6)-ubiquitinyl-[acceptor protein]-L-lysine.. Its pathway is protein modification; protein ubiquitination. E3 ubiquitin ligase catalyzing the covalent attachment of ubiquitin moieties onto substrate proteins. In Xenopus laevis (African clawed frog), this protein is Probable E3 ubiquitin-protein ligase makorin-1 (mkrn1).